Consider the following 74-residue polypeptide: Conotoxin ca17a (74 aa).

Residues 1–20 (MQKATVLLLALLLLLPLSTA) form the signal peptide. Residues 21–40 (QDAEGSQEDAAQREVDIATR) constitute a propeptide that is removed on maturation. Residue Pro51 is modified to 4-hydroxyproline.

Contains disulfide bonds. As to expression, expressed by the venom gland.

It localises to the secreted. The protein is Conotoxin ca17a of Conus caracteristicus (Characteristic cone).